The chain runs to 399 residues: Elongation factor Tu (399 aa).

In terms of domain architecture, tr-type G spans 10 to 209 (KPHVNIGTIG…EVDAYIPTPE (200 aa)). A G1 region spans residues 19 to 26 (GHVDHGKT). 19–26 (GHVDHGKT) contacts GTP. Thr-26 is a binding site for Mg(2+). The segment at 60-64 (GITIA) is G2. Residues 81-84 (DCPG) form a G3 region. GTP is bound by residues 81–85 (DCPGH) and 136–139 (NKQD). A G4 region spans residues 136–139 (NKQD). Residues 174–176 (SAL) are G5.

Belongs to the TRAFAC class translation factor GTPase superfamily. Classic translation factor GTPase family. EF-Tu/EF-1A subfamily. In terms of assembly, monomer.

It localises to the cytoplasm. The catalysed reaction is GTP + H2O = GDP + phosphate + H(+). Its function is as follows. GTP hydrolase that promotes the GTP-dependent binding of aminoacyl-tRNA to the A-site of ribosomes during protein biosynthesis. The sequence is that of Elongation factor Tu from Helicobacter pylori (strain Shi470).